The sequence spans 446 residues: GPI-anchored wall transfer protein 1 (446 aa).

Transmembrane regions (helical) follow at residues 32–52 (VTLAGIFSNAAWIYVVSNNPS), 56–75 (SFWLDFLLNWMGLLCSVTVF), and 76–94 (GENPFLTGILGLSAVLLFG). N-linked (GlcNAc...) asparagine glycosylation is present at Asn-114. 10 helical membrane passes run 122-142 (YRSTMLILTSIAILAVDFPIF), 151-171 (TWGISLMDLGVGSFVFSNGII), 194-214 (STVVLVVLGFIRLFSVKAVNY), 221-241 (YGIHWNFFFTLSLLPLAMIIF), 250-270 (FVIGLIAAIIYELCLIYHPTF), 293-313 (FVGYCIIYLAGQQVGSMFFPI), 320-340 (LLWKLVALSIFSSAISYVLLH), 350-370 (FASIGYSSMVISFNLLILTFD), 395-415 (MLVFLISNVTTGMVNFTFNTL), and 422-442 (AMAILTVYALFLAVFALKVPF).

This sequence belongs to the PIGW family.

Its subcellular location is the endoplasmic reticulum membrane. Its pathway is glycolipid biosynthesis; glycosylphosphatidylinositol-anchor biosynthesis. Functionally, probable acetyltransferase, which acetylates the inositol ring of phosphatidylinositol during biosynthesis of GPI-anchor. This is GPI-anchored wall transfer protein 1 (GWT1) from Kluyveromyces lactis (strain ATCC 8585 / CBS 2359 / DSM 70799 / NBRC 1267 / NRRL Y-1140 / WM37) (Yeast).